A 1563-amino-acid polypeptide reads, in one-letter code: Integrator complex subunit 5-like protein (1563 aa).

2 stretches are compositionally biased toward basic and acidic residues: residues 1-21 (MKEEETIEISEKEKDKERNDN) and 31-44 (EDWRNEETATKNEN). Disordered regions lie at residues 1–63 (MKEE…YDDD), 102–208 (KKSK…NITY), and 270–310 (NSLN…QQNP). The segment covering 52 to 63 (GDSDDDDYYDDD) has biased composition (acidic residues). Low complexity-rich tracts occupy residues 109–133 (TAATTTTTTTTTTTTTTTTTPTATA) and 141–202 (NNLL…NNNN). A helical transmembrane segment spans residues 350-370 (DSIINWSLSTLTIITRLLIIL). The span at 381 to 398 (QQQQQQQQQQQQQQQQQQ) shows a compositional bias: low complexity. Disordered regions lie at residues 381–417 (QQQQQQQQQQQQQQQQQQTKNKTQFPPPPPPPLRQPI), 466–498 (SKSSSSSSSSSSSSSSSSSSSSSSSSSSSSSKT), 637–694 (FDNN…DNSS), and 784–828 (ILNN…SQEI). The segment covering 405–414 (FPPPPPPPLR) has biased composition (pro residues). Low complexity-rich tracts occupy residues 468 to 496 (SSSSSSSSSSSSSSSSSSSSSSSSSSSSS), 639 to 686 (NNNN…NNNN), and 786 to 824 (NNNNNNNNNNNNNNNNNNNNNNNNNNNNNNNNNQQQQQQ). The chain crosses the membrane as a helical span at residues 877 to 897 (IIIKLISLIGMDSIYSSLIIL). Disordered regions lie at residues 1154 to 1173 (SGNFGNGDDDDDEYGDDEYG) and 1268 to 1303 (KQRMKKKKQSIQQNGNINNEQQQEEDDNDDADDQNE). A compositionally biased stretch (acidic residues) spans 1160–1172 (GDDDDDEYGDDEY). The segment covering 1277-1288 (SIQQNGNINNEQ) has biased composition (low complexity). Acidic residues predominate over residues 1289–1303 (QQEEDDNDDADDQNE).

Belongs to the Integrator subunit 5 family. Component of the Integrator complex. The core complex associates with protein phosphatase 2A subunits, to form the Integrator-PP2A (INTAC) complex.

The protein resides in the nucleus. Its subcellular location is the cytoplasm. It localises to the nucleus membrane. Component of the integrator complex, a multiprotein complex that terminates RNA polymerase II (Pol II) transcription in the promoter-proximal region of genes. The integrator complex provides a quality checkpoint during transcription elongation by driving premature transcription termination of transcripts that are unfavorably configured for transcriptional elongation: the complex terminates transcription by (1) catalyzing dephosphorylation of the C-terminal domain (CTD) of Pol II subunit polr2a, (2) degrading the exiting nascent RNA transcript via endonuclease activity and (3) promoting the release of Pol II from bound DNA. The integrator complex is also involved in terminating the synthesis of non-coding Pol II transcripts, such as enhancer RNAs (eRNAs), small nuclear RNAs (snRNAs), telomerase RNAs and long non-coding RNAs (lncRNAs). The chain is Integrator complex subunit 5-like protein from Dictyostelium discoideum (Social amoeba).